The chain runs to 3364 residues: Salivary gland surface protein 1 (3364 aa).

2 beta-propeller regions span residues 1–344 (MLRI…VVDA) and 705–1216 (FEQE…LKAL). A glycan (N-linked (GlcNAc...) asparagine) is linked at asparagine 59. 2 disulfide bridges follow: cysteine 251–cysteine 297 and cysteine 1128–cysteine 1139. Residues 345–2733 (VEPKLDQGSP…PVSQIDPDGQ (2389 aa)) form a rhs/YD-repeats region. Asparagine 1149 carries N-linked (GlcNAc...) asparagine glycosylation. The carbohydrate-binding module (CBM) stretch occupies residues 1345–1494 (NQELVQFLGF…VHVDHVRLSP (150 aa)). The segment at 1575 to 1715 (HSWVESFSPY…VGIKDVIVME (141 aa)) is lectin carbohydrate-recognition domain (lectin-CRD). Positions 2225–2304 (HDKCDQNLIP…SEKMLEQGYP (80 aa)) are wedge domain. 2 disulfides stabilise this stretch: cysteine 2253-cysteine 2285 and cysteine 2407-cysteine 2421. 5 consecutive transmembrane segments (helical) span residues 2734–2754 (IAVTLVLMIIGAIVGAYLGAA), 2774–2794 (IGLFAGAIMGAFAVYGGAATF), 2805–2825 (MIAGALATGVISVAGAFLGAA), 2844–2864 (WNGLLSGASIAVSFPSGFVGI), and 2878–2898 (MIYASLMVGGFLLFVYLGGGM). The tract at residues 3126 to 3216 (YSPDSDGNQI…ARIAPAALRN (91 aa)) is tox-SGS.

In terms of processing, probably cleaved at the C-terminus. As to expression, female saliva (at protein level). Female salivary gland (at protein level). Not detected in female carcass without salivary glands. Not detected in male tissues.

It localises to the cell membrane. The protein localises to the secreted. Functionally, (Microbial infection) Facilitates, but is not essential for, invasion of salivary glands by Plasmodium gallinaceum. Plays a role in Plasmodium gallinaceum oocyst development in mosquito midgut. (Microbial infection) Probably facilitates Zika virus replication in salivary glands. In Aedes aegypti (Yellowfever mosquito), this protein is Salivary gland surface protein 1.